Consider the following 389-residue polypeptide: BTB/POZ domain-containing protein KCTD9 (389 aa).

The region spanning 3-82 is the KHA domain; it reads RVTLFLNGSP…PQTDSKPPEG (80 aa). Ser-11 is subject to Phosphoserine. The 73-residue stretch at 89 to 161 folds into the BTB domain; it reads DWLTLNVGGR…LRHGQLIVND (73 aa). 3 Pentapeptide repeat domains span residues 224–256, 258–297, and 338–376; these read NFSGADLSRLDLRYINFKMANLSRCNLAHANLC, ANLERADLSGSVLDCANLQGVKMLCSNAEGASLKLCNFED, and CNLRGATLAGTDLENCDLSGCDLQEANLRGSNVKGAIFE.

In terms of assembly, forms pentamers. Component of a complex composed of 5 subunits of KCTD9 and 5 CUL3.

It participates in protein modification; protein ubiquitination. Its function is as follows. Substrate-specific adapter of a BCR (BTB-CUL3-RBX1) E3 ubiquitin-protein ligase complex, which mediates the ubiquitination of target proteins, leading to their degradation by the proteasome. This chain is BTB/POZ domain-containing protein KCTD9 (KCTD9), found in Homo sapiens (Human).